A 288-amino-acid chain; its full sequence is Light-independent protochlorophyllide reductase iron-sulfur ATP-binding protein (288 aa).

Residues glycine 10 to threonine 15 and lysine 39 each bind ATP. Serine 14 serves as a coordination point for Mg(2+). The [4Fe-4S] cluster site is built by cysteine 95 and cysteine 129. Asparagine 180–arginine 181 is a binding site for ATP.

Belongs to the NifH/BchL/ChlL family. In terms of assembly, homodimer. Protochlorophyllide reductase is composed of three subunits; ChlL, ChlN and ChlB. [4Fe-4S] cluster is required as a cofactor.

The protein resides in the plastid. Its subcellular location is the chloroplast. The catalysed reaction is chlorophyllide a + oxidized 2[4Fe-4S]-[ferredoxin] + 2 ADP + 2 phosphate = protochlorophyllide a + reduced 2[4Fe-4S]-[ferredoxin] + 2 ATP + 2 H2O. The protein operates within porphyrin-containing compound metabolism; chlorophyll biosynthesis (light-independent). Its function is as follows. Component of the dark-operative protochlorophyllide reductase (DPOR) that uses Mg-ATP and reduced ferredoxin to reduce ring D of protochlorophyllide (Pchlide) to form chlorophyllide a (Chlide). This reaction is light-independent. The L component serves as a unique electron donor to the NB-component of the complex, and binds Mg-ATP. This chain is Light-independent protochlorophyllide reductase iron-sulfur ATP-binding protein, found in Chara vulgaris (Common stonewort).